We begin with the raw amino-acid sequence, 283 residues long: Bifunctional protein FolD (283 aa).

166–168 (GAS) is a binding site for NADP(+).

Belongs to the tetrahydrofolate dehydrogenase/cyclohydrolase family. Homodimer.

The enzyme catalyses (6R)-5,10-methylene-5,6,7,8-tetrahydrofolate + NADP(+) = (6R)-5,10-methenyltetrahydrofolate + NADPH. It catalyses the reaction (6R)-5,10-methenyltetrahydrofolate + H2O = (6R)-10-formyltetrahydrofolate + H(+). It functions in the pathway one-carbon metabolism; tetrahydrofolate interconversion. Catalyzes the oxidation of 5,10-methylenetetrahydrofolate to 5,10-methenyltetrahydrofolate and then the hydrolysis of 5,10-methenyltetrahydrofolate to 10-formyltetrahydrofolate. The protein is Bifunctional protein FolD of Coxiella burnetii (strain CbuK_Q154) (Coxiella burnetii (strain Q154)).